We begin with the raw amino-acid sequence, 637 residues long: Chaperone protein HtpG (637 aa).

Positions 1–348 are a; substrate-binding; it reads MAEAGQMEKH…SNDLPLNVSR (348 aa). The b stretch occupies residues 349–565; that stretch reads EILQDNKITR…DNDMSTQMAK (217 aa). A c region spans residues 566–637; that stretch reads LMEAAGQAVP…TRLNKLMLNA (72 aa).

The protein belongs to the heat shock protein 90 family. As to quaternary structure, homodimer.

The protein localises to the cytoplasm. Molecular chaperone. Has ATPase activity. This is Chaperone protein HtpG from Idiomarina loihiensis (strain ATCC BAA-735 / DSM 15497 / L2-TR).